Consider the following 346-residue polypeptide: Fe(3+) ions import ATP-binding protein FbpC 1 (346 aa).

Residues 5–235 (LEVDGVDKSF…PIDVPTAEFI (231 aa)) enclose the ABC transporter domain. 37 to 44 (GPSGCGKT) contacts ATP.

It belongs to the ABC transporter superfamily. Fe(3+) ion importer (TC 3.A.1.10) family. The complex is composed of two ATP-binding proteins (FbpC), two transmembrane proteins (FbpB) and a solute-binding protein (FbpA).

The protein resides in the cell membrane. The enzyme catalyses Fe(3+)(out) + ATP + H2O = Fe(3+)(in) + ADP + phosphate + H(+). In terms of biological role, part of the ABC transporter complex FbpABC involved in Fe(3+) ions import. Responsible for energy coupling to the transport system. This is Fe(3+) ions import ATP-binding protein FbpC 1 from Rhodococcus jostii (strain RHA1).